The chain runs to 145 residues: Major pollen allergen Lig v 1 (145 aa).

3 disulfides stabilise this stretch: cysteine 19-cysteine 90, cysteine 22-cysteine 131, and cysteine 43-cysteine 78. Asparagine 111 is a glycosylation site (N-linked (GlcNAc...) asparagine).

The protein belongs to the Ole e I family.

The protein localises to the secreted. The polypeptide is Major pollen allergen Lig v 1 (Ligustrum vulgare (Common privet)).